A 130-amino-acid chain; its full sequence is MANNRYQGTGRRKTSVARVTLVPGSGKFTINKKDISEYFNFDTLRVIAKEALELTNNAESYDVTVNVKGGGYTGQAGAIRHGVARALLEVDPDYRAELKRAGFLTRDPRKKERKKYGLKKARKSPQFSKR.

Positions 102-130 are disordered; it reads GFLTRDPRKKERKKYGLKKARKSPQFSKR. Positions 111–130 are enriched in basic residues; sequence KERKKYGLKKARKSPQFSKR.

The protein belongs to the universal ribosomal protein uS9 family.

This chain is Small ribosomal subunit protein uS9, found in Finegoldia magna (strain ATCC 29328 / DSM 20472 / WAL 2508) (Peptostreptococcus magnus).